The following is a 696-amino-acid chain: DNA-directed RNA polymerase subunit beta' (696 aa).

Zn(2+)-binding residues include C69, C71, C87, and C90. Residues D504, D506, and D508 each contribute to the Mg(2+) site.

The protein belongs to the RNA polymerase beta' chain family. RpoC1 subfamily. In terms of assembly, in plastids the minimal PEP RNA polymerase catalytic core is composed of four subunits: alpha, beta, beta', and beta''. When a (nuclear-encoded) sigma factor is associated with the core the holoenzyme is formed, which can initiate transcription. Mg(2+) is required as a cofactor. Zn(2+) serves as cofactor.

The protein localises to the plastid. The protein resides in the chloroplast. The catalysed reaction is RNA(n) + a ribonucleoside 5'-triphosphate = RNA(n+1) + diphosphate. In terms of biological role, DNA-dependent RNA polymerase catalyzes the transcription of DNA into RNA using the four ribonucleoside triphosphates as substrates. This chain is DNA-directed RNA polymerase subunit beta', found in Pinus koraiensis (Korean pine).